A 371-amino-acid polypeptide reads, in one-letter code: MAKKDYYEVLGVNRDASDEEIKKSYRKLAMKYHPDRNPDNPKAEESFKEAKEAYEVLSDEQKRAAYDQYGHAGVDPSAGPGPRQGFGNFADAFGDIFGDIFGGGGGNRRSNVYRGADLRYNMEISLEDAARRTETKIRIPVMSECETCHGSGARPGTQPVTCTTCGGHGQVRMQQGFFSVQQTCPKCHGSGKMVKEPCPSCQGAGRVKKHKTLSVKIPAGVDEGDRIRLSGEGERVNGGPPRDLYVVVHLKQHDIFQRDGGNLHCEMPISFTTAALGGEIEIPTLDGHAKMKIPPETQTGATFRLRGKGIKPLRTNDPGDLMCHVVVETPIKLTERQKELLREMEEINLQDSDKHSPRAKGWMDKVKDFFQ.

The J domain maps to 5 to 70 (DYYEVLGVNR…QKRAAYDQYG (66 aa)). The interval 31–52 (KYHPDRNPDNPKAEESFKEAKE) is disordered. Over residues 32–52 (YHPDRNPDNPKAEESFKEAKE) the composition is skewed to basic and acidic residues. The CR-type zinc-finger motif lies at 132–210 (RTETKIRIPV…CQGAGRVKKH (79 aa)). Positions 145, 148, 162, 165, 184, 187, 198, and 201 each coordinate Zn(2+). CXXCXGXG motif repeat units lie at residues 145–152 (CETCHGSG), 162–169 (CTTCGGHG), 184–191 (CPKCHGSG), and 198–205 (CPSCQGAG).

The protein belongs to the DnaJ family. Homodimer. It depends on Zn(2+) as a cofactor.

Its subcellular location is the cytoplasm. Participates actively in the response to hyperosmotic and heat shock by preventing the aggregation of stress-denatured proteins and by disaggregating proteins, also in an autonomous, DnaK-independent fashion. Unfolded proteins bind initially to DnaJ; upon interaction with the DnaJ-bound protein, DnaK hydrolyzes its bound ATP, resulting in the formation of a stable complex. GrpE releases ADP from DnaK; ATP binding to DnaK triggers the release of the substrate protein, thus completing the reaction cycle. Several rounds of ATP-dependent interactions between DnaJ, DnaK and GrpE are required for fully efficient folding. Also involved, together with DnaK and GrpE, in the DNA replication of plasmids through activation of initiation proteins. The chain is Chaperone protein DnaJ from Methylovorus sp. (strain SS1 / DSM 11726).